The following is a 124-amino-acid chain: Putative outer membrane protein CT_569 (124 aa).

Positions 1–31 are cleaved as a signal peptide; that stretch reads MKKTKKRKQSITLVEMMVVITLIGIIGGALA.

The protein localises to the cell outer membrane. The polypeptide is Putative outer membrane protein CT_569 (Chlamydia trachomatis serovar D (strain ATCC VR-885 / DSM 19411 / UW-3/Cx)).